A 255-amino-acid chain; its full sequence is Pyridoxine 5'-phosphate synthase (255 aa).

Residue Asn12 coordinates 3-amino-2-oxopropyl phosphate. Residue 14-15 (DH) participates in 1-deoxy-D-xylulose 5-phosphate binding. 3-amino-2-oxopropyl phosphate is bound at residue Arg23. Catalysis depends on His48, which acts as the Proton acceptor. The 1-deoxy-D-xylulose 5-phosphate site is built by Arg50 and His55. Glu75 (proton acceptor) is an active-site residue. Thr105 lines the 1-deoxy-D-xylulose 5-phosphate pocket. His199 acts as the Proton donor in catalysis. 3-amino-2-oxopropyl phosphate contacts are provided by residues Gly200 and 221 to 222 (GF).

Belongs to the PNP synthase family. Homooctamer; tetramer of dimers.

The protein localises to the cytoplasm. The catalysed reaction is 3-amino-2-oxopropyl phosphate + 1-deoxy-D-xylulose 5-phosphate = pyridoxine 5'-phosphate + phosphate + 2 H2O + H(+). It functions in the pathway cofactor biosynthesis; pyridoxine 5'-phosphate biosynthesis; pyridoxine 5'-phosphate from D-erythrose 4-phosphate: step 5/5. Its function is as follows. Catalyzes the complicated ring closure reaction between the two acyclic compounds 1-deoxy-D-xylulose-5-phosphate (DXP) and 3-amino-2-oxopropyl phosphate (1-amino-acetone-3-phosphate or AAP) to form pyridoxine 5'-phosphate (PNP) and inorganic phosphate. This is Pyridoxine 5'-phosphate synthase from Rhodopseudomonas palustris (strain BisB18).